Here is a 277-residue protein sequence, read N- to C-terminus: PTS system sorbose-specific EIIC component (277 aa).

The next 5 helical transmembrane spans lie at 1–21, 92–112, 133–153, 177–197, and 219–239; these read MAIS…VGMG, IQKG…LTVL, FTAI…RVSI, VITG…YAMI, and YLKL…IVYV. In terms of domain architecture, PTS EIIC type-4 spans 3–237; it reads ISTIQIILIF…GAVGLIFAIV (235 aa).

The protein resides in the cell membrane. Its function is as follows. The phosphoenolpyruvate-dependent sugar phosphotransferase system (PTS), a major carbohydrate active transport system, catalyzes the phosphorylation of incoming sugar substrates concomitant with their translocation across the cell membrane. The enzyme II SorABCD PTS system is involved in L-sorbose transport. This chain is PTS system sorbose-specific EIIC component, found in Lacticaseibacillus casei (Lactobacillus casei).